The chain runs to 89 residues: Small ribosomal subunit protein uS15 (89 aa).

The protein belongs to the universal ribosomal protein uS15 family. Part of the 30S ribosomal subunit. Forms a bridge to the 50S subunit in the 70S ribosome, contacting the 23S rRNA.

Functionally, one of the primary rRNA binding proteins, it binds directly to 16S rRNA where it helps nucleate assembly of the platform of the 30S subunit by binding and bridging several RNA helices of the 16S rRNA. Forms an intersubunit bridge (bridge B4) with the 23S rRNA of the 50S subunit in the ribosome. This chain is Small ribosomal subunit protein uS15, found in Nitrosococcus oceani (strain ATCC 19707 / BCRC 17464 / JCM 30415 / NCIMB 11848 / C-107).